Reading from the N-terminus, the 61-residue chain is Small ribosomal subunit protein uS14 (61 aa).

C24, C27, C40, and C43 together coordinate Zn(2+).

The protein belongs to the universal ribosomal protein uS14 family. Zinc-binding uS14 subfamily. In terms of assembly, part of the 30S ribosomal subunit. Contacts proteins S3 and S10. It depends on Zn(2+) as a cofactor.

In terms of biological role, binds 16S rRNA, required for the assembly of 30S particles and may also be responsible for determining the conformation of the 16S rRNA at the A site. This is Small ribosomal subunit protein uS14 from Clostridium botulinum (strain Alaska E43 / Type E3).